We begin with the raw amino-acid sequence, 579 residues long: L-ascorbate oxidase (579 aa).

An N-terminal signal peptide occupies residues 1–30 (MLQMGKAREPNFLILFFFGLILAFGISSEG). 2 consecutive Plastocyanin-like domains span residues 33–152 (IRHY…LIVD) and 164–330 (DGEI…NYLP). Cystine bridges form between cysteine 49-cysteine 231, cysteine 111-cysteine 568, and cysteine 210-cysteine 223. Cu cation-binding residues include histidine 90 and histidine 92. An N-linked (GlcNAc...) asparagine glycan is attached at asparagine 122. Residues histidine 134 and histidine 136 each coordinate Cu cation. Asparagine 355 and asparagine 470 each carry an N-linked (GlcNAc...) asparagine glycan. The region spanning 374–553 (NRRIFLLNTQ…HMGMGVVFAE (180 aa)) is the Plastocyanin-like 3 domain. The Cu cation site is built by histidine 475, histidine 478, histidine 480, histidine 536, cysteine 537, histidine 538, histidine 542, and methionine 547.

It belongs to the multicopper oxidase family. Dimer. It depends on Cu cation as a cofactor.

It localises to the secreted. The enzyme catalyses 4 L-ascorbate + O2 = 4 monodehydro-L-ascorbate radical + 2 H2O. Functionally, may be involved in a redox system involving ascorbic acid. This chain is L-ascorbate oxidase (AAO), found in Cucurbita maxima (Pumpkin).